A 346-amino-acid polypeptide reads, in one-letter code: Glycerol-1-phosphate dehydrogenase [NAD(P)+] (346 aa).

NAD(+)-binding positions include 93 to 97 and 115 to 118; these read GTIID and TTAS. Asp-120 provides a ligand contact to substrate. Ser-124 is a binding site for NAD(+). Substrate is bound at residue Asp-167. 2 residues coordinate Zn(2+): Asp-167 and His-247. His-251 is a substrate binding site. Position 263 (His-263) interacts with Zn(2+).

It belongs to the glycerol-1-phosphate dehydrogenase family. Zn(2+) is required as a cofactor.

The protein localises to the cytoplasm. It catalyses the reaction sn-glycerol 1-phosphate + NAD(+) = dihydroxyacetone phosphate + NADH + H(+). The enzyme catalyses sn-glycerol 1-phosphate + NADP(+) = dihydroxyacetone phosphate + NADPH + H(+). The protein operates within membrane lipid metabolism; glycerophospholipid metabolism. In terms of biological role, catalyzes the NAD(P)H-dependent reduction of dihydroxyacetonephosphate (DHAP or glycerone phosphate) to glycerol 1-phosphate (G1P). The G1P thus generated is used as the glycerophosphate backbone of phospholipids in the cellular membranes of Archaea. The sequence is that of Glycerol-1-phosphate dehydrogenase [NAD(P)+] from Pyrococcus furiosus (strain ATCC 43587 / DSM 3638 / JCM 8422 / Vc1).